The sequence spans 338 residues: Nicotinate-nucleotide--dimethylbenzimidazole phosphoribosyltransferase (338 aa).

Glutamate 305 functions as the Proton acceptor in the catalytic mechanism.

Belongs to the CobT family.

It carries out the reaction 5,6-dimethylbenzimidazole + nicotinate beta-D-ribonucleotide = alpha-ribazole 5'-phosphate + nicotinate + H(+). Its pathway is nucleoside biosynthesis; alpha-ribazole biosynthesis; alpha-ribazole from 5,6-dimethylbenzimidazole: step 1/2. Functionally, catalyzes the synthesis of alpha-ribazole-5'-phosphate from nicotinate mononucleotide (NAMN) and 5,6-dimethylbenzimidazole (DMB). The sequence is that of Nicotinate-nucleotide--dimethylbenzimidazole phosphoribosyltransferase from Rhizobium rhizogenes (strain K84 / ATCC BAA-868) (Agrobacterium radiobacter).